An 86-amino-acid chain; its full sequence is MVWAGVKLLHGYRYLLSPWIGNQCRFYPSCSHYAEEALKTHGFLAGIYLTARRLIKCHPWHPGGIDPVPEHEATCCSHTHPTHGKH.

This sequence belongs to the UPF0161 family.

The protein resides in the cell inner membrane. Functionally, could be involved in insertion of integral membrane proteins into the membrane. The polypeptide is Putative membrane protein insertion efficiency factor (Cellvibrio japonicus (strain Ueda107) (Pseudomonas fluorescens subsp. cellulosa)).